Here is a 420-residue protein sequence, read N- to C-terminus: MQDIVRPIDECRVCGHDDWLDVVSFGSTPLAGNLLGDEDDAGGETLFPLDVVVCRRCWLMTLRHVIEPDVLFGHYRYVASDAGSIIQHMRKLVDLCVERIGLTDGDLVVEFGSNTGAHLELFRQAGPRVVGVDPARNLAGVANDRGVETIPAGFTAEVGEEIATRHGLARLVYGRQCFAHIPDIHEVLNGVSALLAPDGLFFVEVPYLVELLKNNQFDTIFHEHFSYFSLGSLCTLFESHGLRVVDVHTADVHGGSIVVFAAPAAADHEVRPAVAEMLAEERSQGIAEERTYREFADRTERVRAQIRELVRGVVADGKTVAGYGAPTKGSALLAACGLGHQEIRFCSDTTVLKQGKILPGSRIPIWSPEQAAGHVPDYYLLLAWNYAPEIIDNEKEFLENGGRFIVPIPEPRVISAESTL.

The protein belongs to the methyltransferase superfamily.

It participates in antibiotic biosynthesis; novobiocin biosynthesis. Functionally, C-methyltransferase that acts together with NovW to catalyze the formation of dTDP-4-keto-6-deoxy-5-C-methyl-L-lyxo-hexose from dTDP-4-keto-6-deoxy-D-glucose in the novobiocin biosynthesis pathway, an aminocoumarin family antibiotic that targets bacterial DNA gyrases. In Streptomyces niveus (Streptomyces spheroides), this protein is C-methyltransferase NovU (novU).